The following is a 500-amino-acid chain: Na(+)/H(+) antiporter NhaB (500 aa).

Transmembrane regions (helical) follow at residues 11–31 (HGFL…FLVL), 34–54 (LLLV…EFIF), 58–78 (MALK…ALLL), 96–116 (VILL…LLLF), 129–149 (AILS…LDAL), 150–170 (TVTA…HRVA), 205–225 (LLMH…VGEP), 241–261 (FFFK…LTCV), 311–331 (ILII…LMVI), 350–370 (FQDA…VAVI), 394–414 (MLYL…VATI), 450–470 (ATPN…APLI), and 477–497 (MVWM…WAVT).

Belongs to the NhaB Na(+)/H(+) (TC 2.A.34) antiporter family.

Its subcellular location is the cell inner membrane. It carries out the reaction 2 Na(+)(in) + 3 H(+)(out) = 2 Na(+)(out) + 3 H(+)(in). Functionally, na(+)/H(+) antiporter that extrudes sodium in exchange for external protons. The protein is Na(+)/H(+) antiporter NhaB of Pseudomonas putida (strain GB-1).